The primary structure comprises 222 residues: MALSVETESHIYRALRTASGAAAHLVALGFTIFVAVLARPGSSLFSWHPVLMSLAFSFLMTEALLMFSPESSLLRSLSRKVRARCHWVLQLLALLCALLGLGLVILHKEQLGKAHLTTRHGQAGLLAVLWAGLQCSGGMGLLYPKLLPRWPLAKLKLYHATSGLVGYLLGSASLLLGMFSLWFTATVTGGAWYLAVLCPILTSLVIMNQVSNAYLYRKRIQP.

Topologically, residues 2-17 are cytoplasmic; it reads ALSVETESHIYRALRT. The Cytochrome b561 domain occupies 14–217; sequence ALRTASGAAA…NQVSNAYLYR (204 aa). A helical transmembrane segment spans residues 18-38; it reads ASGAAAHLVALGFTIFVAVLA. Over 39–46 the chain is Lumenal; the sequence is RPGSSLFS. A helical transmembrane segment spans residues 47-67; it reads WHPVLMSLAFSFLMTEALLMF. Residue H48 coordinates heme b. At 68 to 85 the chain is on the cytoplasmic side; that stretch reads SPESSLLRSLSRKVRARC. The heme b site is built by H86 and H120. Residues 86–106 form a helical membrane-spanning segment; it reads HWVLQLLALLCALLGLGLVIL. The Lumenal segment spans residues 107-122; it reads HKEQLGKAHLTTRHGQ. A helical membrane pass occupies residues 123-143; that stretch reads AGLLAVLWAGLQCSGGMGLLY. Residues 144–162 are Cytoplasmic-facing; that stretch reads PKLLPRWPLAKLKLYHATS. H159 provides a ligand contact to heme b. The helical transmembrane segment at 163–183 threads the bilayer; sequence GLVGYLLGSASLLLGMFSLWF. The Lumenal segment spans residues 184 to 186; it reads TAT. The chain crosses the membrane as a helical span at residues 187–207; the sequence is VTGGAWYLAVLCPILTSLVIM. Topologically, residues 208–222 are cytoplasmic; it reads NQVSNAYLYRKRIQP.

Requires heme b as cofactor. Highly expressed in the brain, lung, liver, and kidney. Moderately expressed in the heart, placenta, skeletal muscle, and pancreas.

It localises to the endoplasmic reticulum membrane. The protein localises to the cytoplasmic vesicle membrane. It catalyses the reaction monodehydro-L-ascorbate radical(out) + L-ascorbate(in) = monodehydro-L-ascorbate radical(in) + L-ascorbate(out). It carries out the reaction Fe(3+)(out) + L-ascorbate(in) = monodehydro-L-ascorbate radical(in) + Fe(2+)(out) + H(+). Transmembrane reductase that may use ascorbate as an electron donor in the cytoplasm and transfer electrons across endoplasmic reticulum membranes to reduce monodehydro-L-ascorbate radical and iron cations Fe(3+) in the lumen of that compartment. The chain is Transmembrane reductase CYB561D2 from Mus musculus (Mouse).